A 196-amino-acid polypeptide reads, in one-letter code: NAD(P)H-quinone oxidoreductase subunit I (196 aa).

2 4Fe-4S ferredoxin-type domains span residues 54–83 and 94–123; these read GRIHFEFDKCIACEVCVRVCPINLPVVDWV and KHYSIDFGVCIFCANCVEYCPTNCLSVTEE. Residues C63, C66, C69, C73, C103, C106, C109, and C113 each contribute to the [4Fe-4S] cluster site. Residues 174-196 form a disordered region; the sequence is PAGAQRAGERPEAIANTAKSSEN.

The protein belongs to the complex I 23 kDa subunit family. As to quaternary structure, NDH-1 is composed of at least 11 different subunits. Requires [4Fe-4S] cluster as cofactor.

The protein resides in the cellular thylakoid membrane. The enzyme catalyses a plastoquinone + NADH + (n+1) H(+)(in) = a plastoquinol + NAD(+) + n H(+)(out). It carries out the reaction a plastoquinone + NADPH + (n+1) H(+)(in) = a plastoquinol + NADP(+) + n H(+)(out). In terms of biological role, NDH-1 shuttles electrons from an unknown electron donor, via FMN and iron-sulfur (Fe-S) centers, to quinones in the respiratory and/or the photosynthetic chain. The immediate electron acceptor for the enzyme in this species is believed to be plastoquinone. Couples the redox reaction to proton translocation, and thus conserves the redox energy in a proton gradient. The chain is NAD(P)H-quinone oxidoreductase subunit I from Thermosynechococcus vestitus (strain NIES-2133 / IAM M-273 / BP-1).